The following is a 342-amino-acid chain: MPAAALLDDFLAFTLAGDAPAERDGACAGGAVRWQWLGDGLLAFEPAATDAAARASVLVSAGVHGDETAPIELLSMLARDLVAGALPLACRLLVVLGNVPAMRAGERYLDDDLNRLFSGRHAQVPASREAPRAAQLEAAASAFFGAAPAGSARWHIDMHTAIRASVFEQFALLPHTGTPPTRAMVEWLGDARIAAVLLHTAKGNTYSHFTAEHCGALACTLELGKVRPFGQNDLTRFAPADRAVRKLVSGGRAEGGATLPRVFTVIDQITKQSDALELFVAADVANFTAFTRGTVLAQDGDYRYTVKHDEERIVFPNPTVKPGLRAGLLVVDTTRDTLAALV.

3 residues coordinate Zn(2+): His-64, Glu-67, and His-159. Glu-222 is an active-site residue.

The protein belongs to the AspA/AstE family. Succinylglutamate desuccinylase subfamily. Zn(2+) is required as a cofactor.

It carries out the reaction N-succinyl-L-glutamate + H2O = L-glutamate + succinate. Its pathway is amino-acid degradation; L-arginine degradation via AST pathway; L-glutamate and succinate from L-arginine: step 5/5. Functionally, transforms N(2)-succinylglutamate into succinate and glutamate. The chain is Succinylglutamate desuccinylase from Burkholderia orbicola (strain AU 1054).